A 282-amino-acid chain; its full sequence is MEMO1 family protein Msm_1438 (282 aa).

Belongs to the MEMO1 family.

This Methanobrevibacter smithii (strain ATCC 35061 / DSM 861 / OCM 144 / PS) protein is MEMO1 family protein Msm_1438.